The chain runs to 250 residues: 1-(5-phosphoribosyl)-5-[(5-phosphoribosylamino)methylideneamino] imidazole-4-carboxamide isomerase (250 aa).

Aspartate 12 functions as the Proton acceptor in the catalytic mechanism. The active-site Proton donor is the aspartate 134.

It belongs to the HisA/HisF family.

The protein resides in the cytoplasm. It catalyses the reaction 1-(5-phospho-beta-D-ribosyl)-5-[(5-phospho-beta-D-ribosylamino)methylideneamino]imidazole-4-carboxamide = 5-[(5-phospho-1-deoxy-D-ribulos-1-ylimino)methylamino]-1-(5-phospho-beta-D-ribosyl)imidazole-4-carboxamide. It participates in amino-acid biosynthesis; L-histidine biosynthesis; L-histidine from 5-phospho-alpha-D-ribose 1-diphosphate: step 4/9. The sequence is that of 1-(5-phosphoribosyl)-5-[(5-phosphoribosylamino)methylideneamino] imidazole-4-carboxamide isomerase from Actinobacillus pleuropneumoniae serotype 3 (strain JL03).